The following is a 1045-amino-acid chain: Extracellular serine protease (1045 aa).

The signal sequence occupies residues 1–27 (MILNKRLKLAYCVFLGCYGLSIHSSLA). A Peptidase S8 domain is found at 49–397 (QWGLEAISAE…WGRVNLRDAI (349 aa)). Residues D76, H112, and S341 each act as charge relay system in the active site. Positions 646–1045 (SLASTENEKA…SVNAGLTWRF (400 aa)) are cleaved as a propeptide — translocator domain; removed in mature form. The region spanning 769 to 1045 (IKADDNGAWA…SVNAGLTWRF (277 aa)) is the Autotransporter domain.

This sequence belongs to the peptidase S8 family.

It localises to the secreted. The chain is Extracellular serine protease from Serratia marcescens.